The chain runs to 176 residues: Cytochrome b (176 aa).

3 helical membrane passes run 33–53 (FGSL…FLAM), 77–98 (WVLR…YLHV), and 113–133 (WNVG…GYVL). Heme b is bound by residues H83 and H97.

The protein belongs to the cytochrome b family. In terms of assembly, the cytochrome bc1 complex contains 11 subunits: 3 respiratory subunits (MT-CYB, CYC1 and UQCRFS1), 2 core proteins (UQCRC1 and UQCRC2) and 6 low-molecular weight proteins (UQCRH/QCR6, UQCRB/QCR7, UQCRQ/QCR8, UQCR10/QCR9, UQCR11/QCR10 and a cleavage product of UQCRFS1). This cytochrome bc1 complex then forms a dimer. Requires heme b as cofactor.

The protein resides in the mitochondrion inner membrane. In terms of biological role, component of the ubiquinol-cytochrome c reductase complex (complex III or cytochrome b-c1 complex) that is part of the mitochondrial respiratory chain. The b-c1 complex mediates electron transfer from ubiquinol to cytochrome c. Contributes to the generation of a proton gradient across the mitochondrial membrane that is then used for ATP synthesis. The polypeptide is Cytochrome b (MT-CYB) (Corynorhinus rafinesquii (Rafinesque's big-eared bat)).